Here is a 704-residue protein sequence, read N- to C-terminus: UvrABC system protein C (704 aa).

Positions 1–77 are disordered; that stretch reads MIHDPAEPPA…PAQAGAGPMA (77 aa). Positions 49–66 are enriched in acidic residues; it reads VEEDDEARLPEVEDEPEA. Residues 67 to 77 show a composition bias toward low complexity; the sequence is EPAQAGAGPMA. Residues 92–170 form the GIY-YIG domain; sequence TSPGVYRMLN…IKQLRPRFNV (79 aa). Positions 280–315 constitute a UVR domain; it reads RAVKELLAAEMEKASGELEFETAALYRDRLAALSAI.

Belongs to the UvrC family. In terms of assembly, interacts with UvrB in an incision complex.

The protein localises to the cytoplasm. Its function is as follows. The UvrABC repair system catalyzes the recognition and processing of DNA lesions. UvrC both incises the 5' and 3' sides of the lesion. The N-terminal half is responsible for the 3' incision and the C-terminal half is responsible for the 5' incision. This Rhodopseudomonas palustris (strain ATCC BAA-98 / CGA009) protein is UvrABC system protein C.